The primary structure comprises 126 residues: Probable cystatin-16 (126 aa).

The N-terminal stretch at 1 to 20 (MFLKATLLLGLAVLGMHVWA) is a signal peptide. Cys84 and Cys94 are oxidised to a cystine. Asn106 carries N-linked (GlcNAc...) asparagine glycosylation.

This sequence belongs to the cystatin family.

The protein resides in the secreted. The sequence is that of Probable cystatin-16 from Bos taurus (Bovine).